The primary structure comprises 312 residues: Probable myosin light chain kinase DDB_G0282429 (312 aa).

The disordered stretch occupies residues 1 to 28 (MDRMDSSDEEIDNISDDELQSGDEIEVE). Acidic residues predominate over residues 7–27 (SDEEIDNISDDELQSGDEIEV). In terms of domain architecture, Protein kinase spans 38 to 290 (YILGNEIGRG…FEQCLIHPWV (253 aa)). ATP is bound by residues 44–52 (IGRGAFSIV) and lysine 67. The active-site Proton acceptor is aspartate 158.

Belongs to the protein kinase superfamily. CAMK Ser/Thr protein kinase family. CaMK subfamily.

The enzyme catalyses L-seryl-[myosin light chain] + ATP = O-phospho-L-seryl-[myosin light chain] + ADP + H(+). It catalyses the reaction L-threonyl-[myosin light chain] + ATP = O-phospho-L-threonyl-[myosin light chain] + ADP + H(+). Its activity is regulated as follows. Does not have a calmodulin-binding domain. In terms of biological role, may phosphorylate a specific serine in the N-terminus of a myosin light chain. The chain is Probable myosin light chain kinase DDB_G0282429 from Dictyostelium discoideum (Social amoeba).